A 162-amino-acid polypeptide reads, in one-letter code: Probable chemoreceptor glutamine deamidase CheD (162 aa).

This sequence belongs to the CheD family.

It catalyses the reaction L-glutaminyl-[protein] + H2O = L-glutamyl-[protein] + NH4(+). Its function is as follows. Probably deamidates glutamine residues to glutamate on methyl-accepting chemotaxis receptors (MCPs), playing an important role in chemotaxis. The protein is Probable chemoreceptor glutamine deamidase CheD of Clostridium botulinum (strain Eklund 17B / Type B).